The primary structure comprises 419 residues: UDP-N-acetylglucosamine 1-carboxyvinyltransferase (419 aa).

22 to 23 is a phosphoenolpyruvate binding site; the sequence is KN. Residue R92 participates in UDP-N-acetyl-alpha-D-glucosamine binding. The Proton donor role is filled by C116. A 2-(S-cysteinyl)pyruvic acid O-phosphothioketal modification is found at C116. Residues D307 and V329 each contribute to the UDP-N-acetyl-alpha-D-glucosamine site.

Belongs to the EPSP synthase family. MurA subfamily.

The protein resides in the cytoplasm. It carries out the reaction phosphoenolpyruvate + UDP-N-acetyl-alpha-D-glucosamine = UDP-N-acetyl-3-O-(1-carboxyvinyl)-alpha-D-glucosamine + phosphate. The protein operates within cell wall biogenesis; peptidoglycan biosynthesis. Its function is as follows. Cell wall formation. Adds enolpyruvyl to UDP-N-acetylglucosamine. In Pseudothermotoga lettingae (strain ATCC BAA-301 / DSM 14385 / NBRC 107922 / TMO) (Thermotoga lettingae), this protein is UDP-N-acetylglucosamine 1-carboxyvinyltransferase.